We begin with the raw amino-acid sequence, 344 residues long: Inositol 2-dehydrogenase/D-chiro-inositol 3-dehydrogenase (344 aa).

Belongs to the Gfo/Idh/MocA family. As to quaternary structure, homotetramer.

The enzyme catalyses myo-inositol + NAD(+) = scyllo-inosose + NADH + H(+). It catalyses the reaction 1D-chiro-inositol + NAD(+) = scyllo-inosine + NADH + H(+). Its pathway is polyol metabolism; myo-inositol degradation into acetyl-CoA; acetyl-CoA from myo-inositol: step 1/7. Its function is as follows. Involved in the oxidation of myo-inositol (MI) and D-chiro-inositol (DCI) to 2-keto-myo-inositol (2KMI or 2-inosose) and 1-keto-D-chiro-inositol (1KDCI), respectively. Can also use D-glucose and D-xylose, and shows a trace of activity with D-ribose and D-fructose. The polypeptide is Inositol 2-dehydrogenase/D-chiro-inositol 3-dehydrogenase (iolG) (Bacillus subtilis (strain 168)).